A 233-amino-acid polypeptide reads, in one-letter code: Uridylate kinase (233 aa).

ATP-binding positions include 9 to 12, Gly-51, and Arg-55; that span reads KLSG. Residues Asp-69 and 130–137 contribute to the UMP site; that span reads TGNPFFST. Residues Asn-158, Tyr-164, and Asp-167 each contribute to the ATP site.

The protein belongs to the UMP kinase family. In terms of assembly, homohexamer.

It is found in the cytoplasm. The enzyme catalyses UMP + ATP = UDP + ADP. It functions in the pathway pyrimidine metabolism; CTP biosynthesis via de novo pathway; UDP from UMP (UMPK route): step 1/1. Inhibited by UTP. Functionally, catalyzes the reversible phosphorylation of UMP to UDP. This Thermus thermophilus (strain ATCC BAA-163 / DSM 7039 / HB27) protein is Uridylate kinase.